The sequence spans 121 residues: MARIAGVDIPNDKRVVISLTYVYGIGLSTSKKILAAAGISEDIRVKDLTPDQEDAIRREVDAIKVEGDLRREVNLNIKRLMEIGSYRGIRHRRGLPVRGQNTKNNARTRKGKAVAIAGKKK.

The segment at 96–121 is disordered; it reads PVRGQNTKNNARTRKGKAVAIAGKKK. Basic residues predominate over residues 106 to 121; that stretch reads ARTRKGKAVAIAGKKK.

Belongs to the universal ribosomal protein uS13 family. In terms of assembly, part of the 30S ribosomal subunit. Forms a loose heterodimer with protein S19. Forms two bridges to the 50S subunit in the 70S ribosome.

In terms of biological role, located at the top of the head of the 30S subunit, it contacts several helices of the 16S rRNA. In the 70S ribosome it contacts the 23S rRNA (bridge B1a) and protein L5 of the 50S subunit (bridge B1b), connecting the 2 subunits; these bridges are implicated in subunit movement. Contacts the tRNAs in the A and P-sites. This chain is Small ribosomal subunit protein uS13, found in Streptococcus agalactiae serotype Ia (strain ATCC 27591 / A909 / CDC SS700).